The primary structure comprises 266 residues: Phosphatidylglycerol--prolipoprotein diacylglyceryl transferase (266 aa).

Transmembrane regions (helical) follow at residues 21 to 41, 60 to 80, 95 to 115, 124 to 144, 176 to 196, 203 to 223, and 236 to 256; these read LAIR…MWLA, LLFA…VLFY, VWTG…AMLW, FFSV…MGRM, SQLY…NIFI, GAVS…IEYF, and WISM…LLML. Arg143 is a binding site for a 1,2-diacyl-sn-glycero-3-phospho-(1'-sn-glycerol).

Belongs to the Lgt family.

The protein localises to the cell inner membrane. It catalyses the reaction L-cysteinyl-[prolipoprotein] + a 1,2-diacyl-sn-glycero-3-phospho-(1'-sn-glycerol) = an S-1,2-diacyl-sn-glyceryl-L-cysteinyl-[prolipoprotein] + sn-glycerol 1-phosphate + H(+). It functions in the pathway protein modification; lipoprotein biosynthesis (diacylglyceryl transfer). Catalyzes the transfer of the diacylglyceryl group from phosphatidylglycerol to the sulfhydryl group of the N-terminal cysteine of a prolipoprotein, the first step in the formation of mature lipoproteins. The chain is Phosphatidylglycerol--prolipoprotein diacylglyceryl transferase from Photobacterium profundum (strain SS9).